Consider the following 200-residue polypeptide: uncharacterized protein (200 aa).

This is an uncharacterized protein from Xylella fastidiosa (strain 9a5c).